Reading from the N-terminus, the 118-residue chain is Co-chaperonin GroES (118 aa).

Belongs to the GroES chaperonin family. Heptamer of 7 subunits arranged in a ring. Interacts with the chaperonin GroEL.

It localises to the cytoplasm. Together with the chaperonin GroEL, plays an essential role in assisting protein folding. The GroEL-GroES system forms a nano-cage that allows encapsulation of the non-native substrate proteins and provides a physical environment optimized to promote and accelerate protein folding. GroES binds to the apical surface of the GroEL ring, thereby capping the opening of the GroEL channel. This is Co-chaperonin GroES from Helicobacter acinonychis (strain Sheeba).